A 615-amino-acid chain; its full sequence is 3-(3-hydroxy-phenyl)propionate/3-hydroxycinnamic acid hydroxylase 1 (615 aa).

The tract at residues 1-20 is disordered; that stretch reads MRPAFEPAAGLGRAHPHETT. FAD contacts are provided by residues 27 to 56 and 294 to 304; these read DVAI…VVEK and FRVKRILLAGD.

It belongs to the PheA/TfdB FAD monooxygenase family. The cofactor is FAD.

It catalyses the reaction 3-(3-hydroxyphenyl)propanoate + NADH + O2 + H(+) = 3-(2,3-dihydroxyphenyl)propanoate + NAD(+) + H2O. The enzyme catalyses (2E)-3-(3-hydroxyphenyl)prop-2-enoate + NADH + O2 + H(+) = (2E)-3-(2,3-dihydroxyphenyl)prop-2-enoate + NAD(+) + H2O. Its pathway is aromatic compound metabolism; 3-phenylpropanoate degradation. Functionally, catalyzes the insertion of one atom of molecular oxygen into position 2 of the phenyl ring of 3-(3-hydroxyphenyl)propionate (3-HPP) and hydroxycinnamic acid (3HCI). The polypeptide is 3-(3-hydroxy-phenyl)propionate/3-hydroxycinnamic acid hydroxylase 1 (Burkholderia vietnamiensis (strain G4 / LMG 22486) (Burkholderia cepacia (strain R1808))).